The primary structure comprises 348 residues: Anthranilate phosphoribosyltransferase (348 aa).

5-phospho-alpha-D-ribose 1-diphosphate-binding positions include Gly81, 84–85 (GD), Thr89, 91–94 (NIST), 109–117 (KHGNRSSSG), and Ser121. Residue Gly81 participates in anthranilate binding. Residue Ser93 participates in Mg(2+) binding. Asn112 serves as a coordination point for anthranilate. Position 167 (Arg167) interacts with anthranilate. 2 residues coordinate Mg(2+): Asp226 and Glu227.

The protein belongs to the anthranilate phosphoribosyltransferase family. As to quaternary structure, homodimer. Mg(2+) serves as cofactor.

It carries out the reaction N-(5-phospho-beta-D-ribosyl)anthranilate + diphosphate = 5-phospho-alpha-D-ribose 1-diphosphate + anthranilate. It functions in the pathway amino-acid biosynthesis; L-tryptophan biosynthesis; L-tryptophan from chorismate: step 2/5. Catalyzes the transfer of the phosphoribosyl group of 5-phosphorylribose-1-pyrophosphate (PRPP) to anthranilate to yield N-(5'-phosphoribosyl)-anthranilate (PRA). The sequence is that of Anthranilate phosphoribosyltransferase from Nitrosopumilus maritimus (strain SCM1).